Consider the following 353-residue polypeptide: Protein XRP2 (353 aa).

Residues Met-1–Lys-37 form a disordered region. Gly-2 is lipidated: N-myristoyl glycine. Residue Cys-3 is the site of S-palmitoyl cysteine attachment. The span at Glu-25–Lys-37 shows a compositional bias: basic and acidic residues. One can recognise a C-CAP/cofactor C-like domain in the interval Pro-27–Pro-182. Residues Gly-101 to Ser-102 and Gln-118 to Arg-121 each bind GTP.

Belongs to the TBCC family. In terms of processing, myristoylated on Gly-2; which may be required for membrane targeting. Palmitoylated on Cys-3; which may be required for plasma membrane targeting.

It is found in the cell membrane. Its function is as follows. Acts as a GTPase-activating protein (GAP) for tubulin in concert with tubulin-specific chaperone C, but does not enhance tubulin heterodimerization. Acts as a GTPase-activating protein. May act as guanine nucleotide dissociation inhibitor towards ADP-ribosylation factor-like proteins. This Xenopus laevis (African clawed frog) protein is Protein XRP2 (rp2).